We begin with the raw amino-acid sequence, 450 residues long: 3-phosphoshikimate 1-carboxyvinyltransferase (450 aa).

Residues 1–26 form a disordered region; that stretch reads MSAHGDPIPMTAHPSGPLSGTAQVPG. Positions 28, 29, and 33 each coordinate 3-phosphoshikimate. Lys-28 serves as a coordination point for phosphoenolpyruvate. Phosphoenolpyruvate is bound by residues Gly-101 and Arg-129. 4 residues coordinate 3-phosphoshikimate: Ser-174, Gln-176, Asp-327, and Lys-354. Gln-176 provides a ligand contact to phosphoenolpyruvate. Catalysis depends on Asp-327, which acts as the Proton acceptor. 2 residues coordinate phosphoenolpyruvate: Arg-358 and Arg-403.

This sequence belongs to the EPSP synthase family. As to quaternary structure, monomer.

It localises to the cytoplasm. The enzyme catalyses 3-phosphoshikimate + phosphoenolpyruvate = 5-O-(1-carboxyvinyl)-3-phosphoshikimate + phosphate. Its pathway is metabolic intermediate biosynthesis; chorismate biosynthesis; chorismate from D-erythrose 4-phosphate and phosphoenolpyruvate: step 6/7. In terms of biological role, catalyzes the transfer of the enolpyruvyl moiety of phosphoenolpyruvate (PEP) to the 5-hydroxyl of shikimate-3-phosphate (S3P) to produce enolpyruvyl shikimate-3-phosphate and inorganic phosphate. This is 3-phosphoshikimate 1-carboxyvinyltransferase from Dinoroseobacter shibae (strain DSM 16493 / NCIMB 14021 / DFL 12).